Consider the following 833-residue polypeptide: MutS protein homolog 5 (833 aa).

The interval 1-45 (MAFRATPGRTPPGPGPRSGIPSASFPSPQPPMAGPGGIEEEDEEE) is disordered. 591–598 (GPNSSGKS) provides a ligand contact to ATP.

This sequence belongs to the DNA mismatch repair MutS family. In terms of assembly, heterooligomer of MSH4 and MSH5. Interacts with HJURP. Interacts with REDIC1.

Its function is as follows. Involved in DNA mismatch repair and meiotic recombination processes. Facilitates crossovers between homologs during meiosis. This is MutS protein homolog 5 (Msh5) from Mus musculus (Mouse).